Here is a 411-residue protein sequence, read N- to C-terminus: L-cysteine:1D-myo-inositol 2-amino-2-deoxy-alpha-D-glucopyranoside ligase (411 aa).

Residue C43 coordinates Zn(2+). Residues 43–46 (CGIT), T58, and 81–83 (NVT) each bind L-cysteinyl-5'-AMP. A 'HIGH' region motif is present at residues 45-55 (ITPYDATHLGH). The 'ERGGDP' region signature appears at 186 to 191 (QRGGDP). An L-cysteinyl-5'-AMP-binding site is contributed by W226. Zn(2+) is bound at residue C230. 248–250 (GSD) is a binding site for L-cysteinyl-5'-AMP. H255 lines the Zn(2+) pocket. Residue I282 participates in L-cysteinyl-5'-AMP binding. A 'KMSKS' region motif is present at residues 288-292 (KMSKS).

The protein belongs to the class-I aminoacyl-tRNA synthetase family. MshC subfamily. As to quaternary structure, monomer. Zn(2+) is required as a cofactor.

The enzyme catalyses 1D-myo-inositol 2-amino-2-deoxy-alpha-D-glucopyranoside + L-cysteine + ATP = 1D-myo-inositol 2-(L-cysteinylamino)-2-deoxy-alpha-D-glucopyranoside + AMP + diphosphate + H(+). In terms of biological role, catalyzes the ATP-dependent condensation of GlcN-Ins and L-cysteine to form L-Cys-GlcN-Ins. The sequence is that of L-cysteine:1D-myo-inositol 2-amino-2-deoxy-alpha-D-glucopyranoside ligase from Mycobacterium ulcerans (strain Agy99).